Here is a 402-residue protein sequence, read N- to C-terminus: Exodeoxyribonuclease 7 large subunit (402 aa).

Belongs to the XseA family. Heterooligomer composed of large and small subunits.

It localises to the cytoplasm. It carries out the reaction Exonucleolytic cleavage in either 5'- to 3'- or 3'- to 5'-direction to yield nucleoside 5'-phosphates.. In terms of biological role, bidirectionally degrades single-stranded DNA into large acid-insoluble oligonucleotides, which are then degraded further into small acid-soluble oligonucleotides. The sequence is that of Exodeoxyribonuclease 7 large subunit from Streptomyces coelicolor (strain ATCC BAA-471 / A3(2) / M145).